Consider the following 465-residue polypeptide: Purple acid phosphatase 2 (465 aa).

The N-terminal stretch at methionine 1 to arginine 32 is a signal peptide. Asparagine 110 and asparagine 138 each carry an N-linked (GlcNAc...) asparagine glycan. Aspartate 164 is a binding site for Fe cation. An N-linked (GlcNAc...) asparagine glycan is attached at asparagine 172. Positions 193 and 196 each coordinate Fe cation. Position 193 (aspartate 193) interacts with Mn(2+). A Mn(2+)-binding site is contributed by asparagine 230. Substrate is bound at residue asparagine 230. The N-linked (GlcNAc...) asparagine glycan is linked to asparagine 303. Histidine 315 is a binding site for Mn(2+). Residue histidine 325 is the Proton donor of the active site. Histidine 352 lines the Mn(2+) pocket. Substrate is bound at residue histidine 352–histidine 354. Histidine 354 contacts Fe cation. Residues asparagine 400 and asparagine 425 are each glycosylated (N-linked (GlcNAc...) asparagine).

The protein belongs to the metallophosphoesterase superfamily. Purple acid phosphatase family. In terms of assembly, homodimer; disulfide-linked. Requires Fe cation as cofactor. Mn(2+) serves as cofactor. The cofactor is Zn(2+). It depends on Cu(2+) as a cofactor. Mg(2+) is required as a cofactor.

Its subcellular location is the secreted. It catalyses the reaction a phosphate monoester + H2O = an alcohol + phosphate. The sequence is that of Purple acid phosphatase 2 (PAP2) from Ipomoea batatas (Sweet potato).